A 162-amino-acid polypeptide reads, in one-letter code: Toluate 1,2-dioxygenase subunit beta (162 aa).

This sequence belongs to the bacterial ring-hydroxylating dioxygenase beta subunit family. As to quaternary structure, this dioxygenase system consists of three proteins: the two subunits of the hydroxylase component (XylX and XylY), and an electron transfer component (XylZ).

Its pathway is xenobiotic degradation; toluene degradation. This chain is Toluate 1,2-dioxygenase subunit beta (xylY), found in Pseudomonas putida (Arthrobacter siderocapsulatus).